A 558-amino-acid chain; its full sequence is Arginine--tRNA ligase (558 aa).

A 'HIGH' region motif is present at residues 119–129 (ANPNGPLHVGH).

Belongs to the class-I aminoacyl-tRNA synthetase family.

The protein localises to the cytoplasm. It catalyses the reaction tRNA(Arg) + L-arginine + ATP = L-arginyl-tRNA(Arg) + AMP + diphosphate. In Methanoregula boonei (strain DSM 21154 / JCM 14090 / 6A8), this protein is Arginine--tRNA ligase.